The chain runs to 303 residues: Recombination-associated protein RdgC (303 aa).

This sequence belongs to the RdgC family.

It is found in the cytoplasm. The protein localises to the nucleoid. Functionally, may be involved in recombination. This Serratia proteamaculans (strain 568) protein is Recombination-associated protein RdgC.